The sequence spans 874 residues: Rho GTPase-activating protein 42 (874 aa).

Positions 7 to 262 (EFSDSYLDSP…MKSANQDYRP (256 aa)) constitute a BAR domain. Positions 225-261 (KQQLQFNLQNTRNNFESTRQEVERLMQRMKSANQDYR) form a coiled coil. The 110-residue stretch at 265–374 (QWTMEGYLYV…WLEAMDGKEP (110 aa)) folds into the PH domain. Position 376 is a phosphotyrosine (Tyr-376). The region spanning 376-572 (YTLPAIISKK…ILIEHYEKIF (197 aa)) is the Rho-GAP domain. The tract at residues 575-720 (APDPSIPLPQ…GDVSPPIDLV (146 aa)) is disordered. The span at 620 to 650 (DSYSSSPDSTPMGSIESLSSHSSEQNSTTKS) shows a compositional bias: low complexity. Residues 667–686 (TPSSSNGQKSLGLWTTSPES) show a composition bias toward polar residues. Ser-683 carries the phosphoserine modification. The segment covering 687 to 697 (SSREDATKTDA) has biased composition (basic and acidic residues). Polar residues predominate over residues 700–711 (DCQSVASVTSPG). 4 positions are modified to phosphoserine: Ser-740, Ser-753, Ser-756, and Ser-811. The segment covering 749–762 (SYSGSIQSLTSVGS) has biased composition (polar residues). A disordered region spans residues 749–777 (SYSGSIQSLTSVGSKETPKASPNPDLPPK). Positions 816-874 (SSGRQAKAMYSCKAEHSHELSFPQGAIFSNVYPSVEPGWLKATYEGKTGLVPENYVVFL) constitute an SH3 domain. Tyr-870 carries the post-translational modification Phosphotyrosine.

Highly and selectively expressed in smooth muscle cells.

Its function is as follows. May influence blood pressure by functioning as a GTPase-activating protein for RHOA in vascular smooth muscle. The sequence is that of Rho GTPase-activating protein 42 from Homo sapiens (Human).